The primary structure comprises 647 residues: MRFIGSKVNLLDNIQEVIEENVKDDAHVFMDLFSGTGIVGENFKKDYQVLSNDSLYFSYILLKAKIENNSIPNFSELKKIGIKEPLHYLENEEFEISHEFFLTHNYSPYMGCERMYFTVENASRIDFIRLTLNRWKNESLINELEFAYLLAILIEAVPFISNISGTYGAYLKHWDKRALGKLKLRTLDIGNNHYANKTYNEDANSLIEKVYGDILYIDPPYNGRQYISNYHLLETIALYDYPEIYGKTGLRPYVESKSLYCQKKEVGNAFNHLIEKANFRHILVSYSSEGLLLEEEIESILKSHGLPETYRIYKMPYRKYKSKHKQEASELHEYIFYIQKDIALTNSVKSNKKIEVGKHKTNSYIKSPLNYVGGKHKLLNQIVPLFPDKIDTFVDLFSGGFNVGINVNANKIIATDINTYVVEVLDTMKKTSVEEVIAHIERRIEEYGLSKSNEEGFKAFRNYYNKTKKPLDLYTLICYSFNYQFRFNNNQEYNNPFGRERSQFSPALKKKLVLFIEALHEKNVQFVCSEFEHFNFSQLDQNDLVYCDPPYLITTGSYNDGNRGFKDWNRLQEIKLLDILDHLNSKGVYFALSNVLSHKGLENELLLEWSKKYNIHHLQHSYSNSSHNTTRGESQEVLITNYTNYTK.

2 short sequence motifs (adenine-specific methylase) span residues 218–221 and 548–551; these read DPPY.

Belongs to the N(4)/N(6)-methyltransferase family. As to quaternary structure, monomer.

It catalyses the reaction a 2'-deoxyadenosine in DNA + S-adenosyl-L-methionine = an N(6)-methyl-2'-deoxyadenosine in DNA + S-adenosyl-L-homocysteine + H(+). In terms of biological role, an alpha subtype methylase that recognizes the asymmetric double-stranded sequence 5'-GGATG-3', methylates A-3 of both strands, and protects the DNA from cleavage by the FokI endonuclease. The protein is Type II methyltransferase M.FokI of Planomicrobium okeanokoites (Planococcus okeanokoites).